A 616-amino-acid polypeptide reads, in one-letter code: UvrABC system protein C (616 aa).

Residues 21–99 form the GIY-YIG domain; it reads HQPGVYRMYD…IKLYLPKYNV (79 aa). A UVR domain is found at 209 to 244; that stretch reads RQVIASLVEKMEQASQSLNFEQAATFRDQIQALRRV.

It belongs to the UvrC family. In terms of assembly, interacts with UvrB in an incision complex.

It is found in the cytoplasm. The UvrABC repair system catalyzes the recognition and processing of DNA lesions. UvrC both incises the 5' and 3' sides of the lesion. The N-terminal half is responsible for the 3' incision and the C-terminal half is responsible for the 5' incision. The protein is UvrABC system protein C of Photobacterium profundum (strain SS9).